A 635-amino-acid chain; its full sequence is Interferon-induced GTP-binding protein Mx2 (635 aa).

Positions 31 to 304 (DLALPAIAVI…LVQHIEKSMP (274 aa)) constitute a Dynamin-type G domain. The interval 41-48 (GDQSSGKS) is G1 motif. GTP is bound at residue 41–48 (GDQSSGKS). The segment at 66 to 68 (VTR) is G2 motif. The tract at residues 142–145 (DLPG) is G3 motif. GTP contacts are provided by residues 142-146 (DLPGI) and 211-214 (TKPD). Residues 211–214 (TKPD) form a G4 motif region. The tract at residues 243–246 (KCRG) is G5 motif. The GED domain occupies 549-635 (LREMMLHLKS…MKAHNYLVEF (87 aa)).

It belongs to the TRAFAC class dynamin-like GTPase superfamily. Dynamin/Fzo/YdjA family.

The protein localises to the nucleus. The protein resides in the cytoplasm. Does not inhibit strain RB-1 of the fish pathogen, infectious hematopoietic necrosis virus (IHNV). This chain is Interferon-induced GTP-binding protein Mx2, found in Oncorhynchus mykiss (Rainbow trout).